The sequence spans 224 residues: UPF0758 protein VSAL_I0192 (224 aa).

The 123-residue stretch at 102–224 folds into the MPN domain; the sequence is ALTSPEHTKR…IVSFAERGWI (123 aa). 3 residues coordinate Zn(2+): His-173, His-175, and Asp-186. The JAMM motif motif lies at 173–186; sequence HNHPSGVAEPSQAD.

This sequence belongs to the UPF0758 family.

This chain is UPF0758 protein VSAL_I0192, found in Aliivibrio salmonicida (strain LFI1238) (Vibrio salmonicida (strain LFI1238)).